The primary structure comprises 2248 residues: Zinc finger protein 407 (2248 aa).

Basic and acidic residues predominate over residues 1 to 32 (MMDSENKPENDEDEKINKEAQDLTKLSSHNED). Residues 1–84 (MMDSENKPEN…RRKLDEAEPL (84 aa)) form a disordered region. 3 C2H2-type zinc fingers span residues 186-208 (LKCSICGHLFSSCSDLEKHAESH), 215-238 (HTCCHCSHKAESSSALHMHIKQAH), and 244-268 (FSCDLCGFQCSEENLLNAHYLGKTH). Disordered regions lie at residues 291-322 (KKSRTMATKNVHSKPRTSKSIAKNSDSKGLRN) and 494-515 (SETQEAEQGQGSARPPDSGLHS). Residues 494-504 (SETQEAEQGQG) show a composition bias toward polar residues. 3 consecutive C2H2-type zinc fingers follow at residues 528–551 (CACTDCGQVATNRTDLEIHVKRCH), 557–581 (FYCRTCDFSSMSRRDLDEHLHSNQH), and 615–639 (FLCTPCNLFFLSEKDVEEHKATEKH). The tract at residues 667 to 700 (ESENAKESMDDSGKASQEEPLKSRVSHGNEVRHS) is disordered. Residues 669-699 (ENAKESMDDSGKASQEEPLKSRVSHGNEVRH) show a composition bias toward basic and acidic residues. The C2H2-type 7 zinc finger occupies 705–728 (FQCKKCFYKTRSSTVLTRHIKLRH). Residues 821–847 (LSQSGGSTKDDELASTTTPKRGRPKGN) form a disordered region. 2 consecutive C2H2-type zinc fingers follow at residues 850–873 (RTCSHCGLLASSITNLTVHIRRKH) and 879–903 (YLCKVCKYYTVTKGDMERHCATKKH). The segment at 910–962 (EASGKHSSDIIVGPEGGSLEAGKKNAGSAVTMSDEHANKPAESPTSVLEKPDR) is disordered. C2H2-type zinc fingers lie at residues 1017–1040 (NKCLHCEFSAHSSASLELHVKRKH) and 1046–1070 (FYCMACDYYAVTRREMTRHAATEKH). Position 1262 is a phosphoserine (S1262). C2H2-type zinc fingers lie at residues 1444–1468 (FHCLLCGKSFYTESNLHQHLASAGH) and 1486–1509 (FKCVKCTEPFDSEQNLFLHIKGQH). Residues 1537–1561 (NVCKYCGKMCRSSNSMAFLAHIRTH) form a C2H2-type 14; degenerate zinc finger. C2H2-type zinc fingers lie at residues 1567 to 1589 (FKCKICHFATAQLGDARNHVKRH), 1595 to 1618 (YKCHVCGVAFVMKKHLNTHLLGKH), 1628 to 1650 (FTCHLCDRSFTEKWALNNHMKLH), 1656 to 1680 (FKCTWPTCHYSFLTASAMKDHYRTH), 1686 to 1708 (FLCDLCGFAGGTRHALTKHRRQH), 1714 to 1736 (FKCDECNFASTTQSHLTRHKRVH), 1742 to 1767 (YRCPWCDYRSNCAENIRKHILHTGKH), and 1773 to 1796 (YNCPKCDYGTNVPVEFRNHLKEQH).

Its subcellular location is the nucleus. Functionally, may be involved in transcriptional regulation. The chain is Zinc finger protein 407 (ZNF407) from Homo sapiens (Human).